The sequence spans 485 residues: 28S rRNA (uridine-N(3))-methyltransferase (485 aa).

The S-adenosyl-L-methionine site is built by arginine 296, glycine 318, and asparagine 347.

It belongs to the class IV-like SAM-binding methyltransferase superfamily.

Its subcellular location is the nucleus. It catalyses the reaction uridine in 28S rRNA + S-adenosyl-L-methionine = N(3)-methyluridine in 28S rRNA + S-adenosyl-L-homocysteine + H(+). S-adenosyl-L-methionine-dependent methyltransferase that specifically methylates the uridine in position 3485 of 28S rRNA. This is 28S rRNA (uridine-N(3))-methyltransferase from Drosophila melanogaster (Fruit fly).